Here is a 187-residue protein sequence, read N- to C-terminus: Phosphatidylethanolamine-binding protein 2 (187 aa).

Residues Ser-13, Ser-52, and Ser-54 each carry the phosphoserine modification.

This sequence belongs to the phosphatidylethanolamine-binding protein family. Testis specific.

It is found in the cytoplasm. Functionally, may bind to phospholipids. May act as serine protease inhibitor. In Mus musculus (Mouse), this protein is Phosphatidylethanolamine-binding protein 2 (Pbp2).